The following is a 247-amino-acid chain: Eukaryotic translation initiation factor 6 (247 aa).

Phosphoserine; by CK1 is present on residues S174 and S175.

It belongs to the eIF-6 family. In terms of assembly, monomer. Associates with the 60S ribosomal subunit. Phosphorylation at Ser-174 and Ser-175 promotes nuclear export.

It localises to the cytoplasm. The protein localises to the nucleus. Its subcellular location is the nucleolus. Binds to the 60S ribosomal subunit and prevents its association with the 40S ribosomal subunit to form the 80S initiation complex in the cytoplasm. Is also involved in ribosome biogenesis. Associates with pre-60S subunits in the nucleus and is involved in its nuclear export. This Talaromyces stipitatus (strain ATCC 10500 / CBS 375.48 / QM 6759 / NRRL 1006) (Penicillium stipitatum) protein is Eukaryotic translation initiation factor 6 (tif6).